Consider the following 671-residue polypeptide: Spartin (671 aa).

Position 1 is an N-acetylmethionine (methionine 1). One can recognise an MIT domain in the interval 16-94 (IKEAYEKAFM…LQNVRTRLEI (79 aa)). Positions 110-175 (VPKLYPEFPP…CPAEAPPAYS (66 aa)) are disordered. The segment covering 118 to 128 (PPKDACKKSPE) has biased composition (basic and acidic residues). Phosphoserine is present on serine 126. A compositionally biased stretch (low complexity) spans 143–158 (GSASAACAGPSGAPSA). Pro residues predominate over residues 159-174 (LPVPSPSCPAEAPPAY). The segment at 190–385 (DSGEFSSVGE…SIDQGSKDAR (196 aa)) is ubiquitin-binding region (UBR) domain. The short motif at 193-200 (EFSSVGED) is the LC3-interacting region (LIR); mediates interaction with MAP1LC3A AND MAP1LC3C element. The segment at 346–421 (FQIPGRSSHP…SSEEKSKELP (76 aa)) is disordered. Lysine 360 is covalently cross-linked (Glycyl lysine isopeptide (Lys-Gly) (interchain with G-Cter in ubiquitin)). A compositionally biased stretch (low complexity) spans 369–379 (QSSSSGSSIDQ). A compositionally biased stretch (basic residues) spans 384 to 393 (ARHKGKRGKK). The region spanning 431–615 (ILSGASWVSW…YNIDNIGIKA (185 aa)) is the Senescence domain. The tract at residues 435-507 (ASWVSWGLVK…LVDGVCTVAN (73 aa)) is required for localization to lipid droplets. A Phosphoserine modification is found at serine 474. The interval 635 to 671 (VERPQRESQGGATSTEGRRDIGKQVEEEKPGAGKKDK) is disordered. Over residues 650–671 (EGRRDIGKQVEEEKPGAGKKDK) the composition is skewed to basic and acidic residues.

As to quaternary structure, interacts with ITCH and WWP1. Interacts (via MIT domain) with IST1; leading to the recruitment of SPART to midbodies. Interacts with MAP1LC3A and MAP1LC3C. Ubiquitinated; ubiquitination does not require ITCH and WWP1. In terms of tissue distribution, brain (at protein level).

It localises to the cytoplasm. Its subcellular location is the midbody. The protein localises to the lipid droplet. Its function is as follows. Lipophagy receptor that plays an important role in lipid droplet (LD) turnover in motor neurons. Localizes to LDs and interacts with components of the autophagy machinery, such as MAP1LC3A/C proteins to deliver LDs to autophagosomes for degradation via lipophagy. Lipid transfer protein required for lipid droplet degradation, including by lipophagy. Can bind and transfer all lipid species found in lipid droplets, from phospholipids to triglycerides and sterol esters but the direction of lipid transfer by spartin and its cargos are unknown. May be implicated in endosomal trafficking, or microtubule dynamics, or both. Participates in cytokinesis. This chain is Spartin, found in Mus musculus (Mouse).